The chain runs to 427 residues: Cryptic catabolic NAD-specific glutamate dehydrogenase GudB (427 aa).

Substrate is bound by residues K80 and K107. K119 serves as the catalytic Proton donor. NAD(+)-binding residues include T203 and N234. S361 serves as a coordination point for substrate.

This sequence belongs to the Glu/Leu/Phe/Val dehydrogenases family. Homohexamer.

It carries out the reaction L-glutamate + NAD(+) + H2O = 2-oxoglutarate + NH4(+) + NADH + H(+). GudB seems to be intrinsically inactive, however spontaneous mutations removing a 9-bp direct repeat within the wild-type gudB sequence activated the GudB protein and allowed more-efficient utilization of amino acids of the glutamate family (called gutB1). This 3 amino acid insertion presumably causes severe destabilization of the fold of the protein, leading to an inactive enzyme that is very quickly degraded. The cryptic GudB serves as a buffer that may compensate for mutations in the rocG gene and that can also be decryptified for the utilization of glutamate as a single carbon source in the absence of arginine. It is unable to synthesize glutamate. This is Cryptic catabolic NAD-specific glutamate dehydrogenase GudB from Bacillus subtilis (strain 168).